Reading from the N-terminus, the 493-residue chain is Protein LTV1 homolog (493 aa).

Disordered stretches follow at residues 42–63 (AAAR…QRQE), 97–119 (PNQA…KLML), and 170–207 (IQAM…DENE). A compositionally biased stretch (acidic residues) spans 176–207 (GDSDDEEWDDEDGEEQSDMDFDSDDLNEDENE). Phosphoserine is present on residues Ser345, Ser369, Ser370, Ser424, and Ser427. Positions 359 to 387 (VIDEPRRSRRSSASTNPAPIQIDPKTGLP) are disordered. The stretch at 437–468 (KDETHEEKKERKRLLKDYRNERRIEKKANTEA) forms a coiled coil. Residues 465–474 (NTEAFKEEKK) are compositionally biased toward basic and acidic residues. A disordered region spans residues 465-493 (NTEAFKEEKKRQTHVKINQRTNQQGASIV). Positions 479–493 (VKINQRTNQQGASIV) are enriched in polar residues.

This sequence belongs to the LTV1 family. In terms of assembly, interacts with RpS3; the interaction is RNA-independent. Associates with free 40S ribosome subunits.

It localises to the cytoplasm. In terms of biological role, necessary for the biogenesis of 40S ribosome subunits by regulating pre-rRNA processing. Non-ribosomal factor required for efficient nuclear export of the ribosomal 40S subunit. Necessary for endoreplication driven by Myc. In Drosophila melanogaster (Fruit fly), this protein is Protein LTV1 homolog.